The chain runs to 100 residues: MVSLHSYLILSAILFSIGTIGVLIRRNAIVIFMCVEMMLNSVNLTFIALSKHLGNVDGQIFVFFVMTVAAAEAAVGLALMIAFYKNRESIDVEDIKLMRL.

A run of 3 helical transmembrane segments spans residues 4-24 (LHSY…GVLI), 29-49 (IVIF…FIAL), and 60-80 (IFVF…LALM).

This sequence belongs to the complex I subunit 4L family. NDH-1 is composed of 14 different subunits. Subunits NuoA, H, J, K, L, M, N constitute the membrane sector of the complex.

The protein localises to the cell inner membrane. It carries out the reaction a quinone + NADH + 5 H(+)(in) = a quinol + NAD(+) + 4 H(+)(out). NDH-1 shuttles electrons from NADH, via FMN and iron-sulfur (Fe-S) centers, to quinones in the respiratory chain. The immediate electron acceptor for the enzyme in this species is believed to be ubiquinone. Couples the redox reaction to proton translocation (for every two electrons transferred, four hydrogen ions are translocated across the cytoplasmic membrane), and thus conserves the redox energy in a proton gradient. The chain is NADH-quinone oxidoreductase subunit K 2 from Geobacter metallireducens (strain ATCC 53774 / DSM 7210 / GS-15).